The primary structure comprises 186 residues: Interferon beta-2 (186 aa).

The first 21 residues, 1 to 21 (MTHRCLLQMVLLLCFSTTALS), serve as a signal peptide directing secretion. An intrachain disulfide couples C52 to C161. Residues N131 and N173 are each glycosylated (N-linked (GlcNAc...) asparagine).

This sequence belongs to the alpha/beta interferon family. In terms of assembly, monomer.

The protein resides in the secreted. Its function is as follows. Has antiviral, antibacterial and anticancer activities. This Bos taurus (Bovine) protein is Interferon beta-2 (IFNB2).